We begin with the raw amino-acid sequence, 201 residues long: Translation initiation factor IF-3 (201 aa).

It belongs to the IF-3 family. As to quaternary structure, monomer.

It is found in the cytoplasm. Its function is as follows. IF-3 binds to the 30S ribosomal subunit and shifts the equilibrium between 70S ribosomes and their 50S and 30S subunits in favor of the free subunits, thus enhancing the availability of 30S subunits on which protein synthesis initiation begins. This is Translation initiation factor IF-3 from Mycoplasma pneumoniae (strain ATCC 29342 / M129 / Subtype 1) (Mycoplasmoides pneumoniae).